We begin with the raw amino-acid sequence, 503 residues long: Probable cytosol aminopeptidase (503 aa).

Positions 274 and 279 each coordinate Mn(2+). Lys286 is a catalytic residue. Mn(2+) is bound by residues Asp297, Asp356, and Glu358. Arg360 is an active-site residue.

The protein belongs to the peptidase M17 family. Requires Mn(2+) as cofactor.

It is found in the cytoplasm. It catalyses the reaction Release of an N-terminal amino acid, Xaa-|-Yaa-, in which Xaa is preferably Leu, but may be other amino acids including Pro although not Arg or Lys, and Yaa may be Pro. Amino acid amides and methyl esters are also readily hydrolyzed, but rates on arylamides are exceedingly low.. The catalysed reaction is Release of an N-terminal amino acid, preferentially leucine, but not glutamic or aspartic acids.. Its function is as follows. Presumably involved in the processing and regular turnover of intracellular proteins. Catalyzes the removal of unsubstituted N-terminal amino acids from various peptides. The polypeptide is Probable cytosol aminopeptidase (Burkholderia multivorans (strain ATCC 17616 / 249)).